A 909-amino-acid polypeptide reads, in one-letter code: E3 ubiquitin-protein ligase MARCHF6 (909 aa).

Met1 carries the N-acetylmethionine modification. An RING-CH-type zinc finger spans residues 1–62 (MDTAEEDICR…ELCKHRFAFT (62 aa)). Residues 1–91 (MDTAEEDICR…LVTSIGTAIR (91 aa)) lie on the Cytoplasmic side of the membrane. Residues Cys9, Cys12, Cys26, Cys28, His36, Cys39, Cys52, and Cys55 each contribute to the Zn(2+) site. The chain crosses the membrane as a helical span at residues 92 to 112 (YWFHYTLVAFAWLGVVPLTAC). Over 113 to 142 (RIYKCLFTGSVSSLLTLPLDMLSTENLLAD) the chain is Extracellular. A helical transmembrane segment spans residues 143 to 163 (CLQGCFVVTCTLCAFISLVWL). Over 164 to 283 (REQIVHGGAP…WERMLGLDGS (120 aa)) the chain is Cytoplasmic. The disordered stretch occupies residues 186–256 (AGHHQNEAPV…AADANNGAQD (71 aa)). The span at 228 to 248 (QAEEEEEDNEEEDDAGVEDAA) shows a compositional bias: acidic residues. The chain crosses the membrane as a helical span at residues 284-304 (LVFLEHVFWVVSLNTLFILVF). At 305–336 (AFCPYHIGHFSLVGLGFEEHVQASHFEGLITT) the chain is on the extracellular side. A helical transmembrane segment spans residues 337–357 (IVGYILLAITLIICHALATLV). Topologically, residues 358-376 (KFHRSRRLLGVCYIVVKVS) are cytoplasmic. A helical transmembrane segment spans residues 377-397 (LLVVVEIGVFPLICGWWLDIC). Topologically, residues 398–421 (SLEMFDATLKDRELSFQSAPGTTM) are extracellular. A helical transmembrane segment spans residues 422–442 (FLHWLVGMVYVFYFASFILLL). At 443 to 480 (REVLRPGVLWFLRNLNDPDFNPVQEMIHLPIYRHLRRF) the chain is on the cytoplasmic side. A helical transmembrane segment spans residues 481–501 (ILSVIVFGSIVLLMLWLPIRI). Residues 502-519 (IKSLLPNFLPYNVMLYSD) are Extracellular-facing. A helical transmembrane segment spans residues 520 to 540 (APVSELSLELLLLQVVLPALL). Residues 541-631 (EQGHTRQWLK…YRRPLNFPLR (91 aa)) lie on the Cytoplasmic side of the membrane. Residues 632–652 (IFLLIVFMCITLLIASLICLT) traverse the membrane as a helical segment. Over 653–677 (LPVFAGRWLMSFWTGTAKIHELYTA) the chain is Extracellular. The helical transmembrane segment at 678–698 (ACGLYVCWLTIRAVTVLVAWM) threads the bilayer. The Cytoplasmic segment spans residues 699–720 (PQGRRVIFQKVKEWSLMIMKTL). Residues 721–741 (IVAVLLAGVVPLLLGLLFELV) form a helical membrane-spanning segment. At 742–763 (IVAPLRVPLDQTPLFYPWQDWA) the chain is on the extracellular side. The chain crosses the membrane as a helical span at residues 764–784 (LGVLHAKIIAAITLMGPQWWL). Residues 785-814 (KTVIEQVYANGIRNIDLHYIIRKLAAPVIS) lie on the Cytoplasmic side of the membrane. A helical membrane pass occupies residues 815–835 (VLLLSLCVPYVIASGAVPLLG). The Extracellular portion of the chain corresponds to 836-847 (VTAEMQNLVHRR). A helical membrane pass occupies residues 848–868 (IYPFLLMVVVLMGILSFQVRQ). Over 869–909 (FKRLYEHIKNDKYLVGQRLVNYERKSGKQGPSTPPPVSSQE) the chain is Cytoplasmic.

It belongs to the DOA10/MARCHF6 family. Interacts with DIO2. Interacts with SQLE. Post-translationally, auto-ubiquitinated, which results in proteasomal degradation. Deubiquitinated by USP19; protecting MARCHF6 from p97-mediated proteasomal degradation.

It localises to the endoplasmic reticulum membrane. The catalysed reaction is S-ubiquitinyl-[E2 ubiquitin-conjugating enzyme]-L-cysteine + [acceptor protein]-L-lysine = [E2 ubiquitin-conjugating enzyme]-L-cysteine + N(6)-ubiquitinyl-[acceptor protein]-L-lysine.. It participates in protein modification; protein ubiquitination. Functionally, endoplasmic reticulum membrane-associated E3 ubiquitin ligase that plays a critical role in mitigating endoplasmic reticulum stress, the regulation of cholesterol and lipid homeostasis, and ferroptosis. Acts as a pivotal component of both the Ac/N-degron pathway (targeting the N-terminal acetyl group of substrates) and the ER-associated protein degradation-cytosol (ERAD-C) pathway (targeting misfolded substrates). For instance, mediates the degradation of Ac/N-degron-bearing proteins such as the G-protein regulator RGS2 and the lipid droplet protein PLIN2. Suppresses endoplasmic reticulum stress and ferroptosis through cytosolic POMC degradation. Prevents ferroptosis by acting as a NADPH sensor during lipid peroxidation through its C-terminal regulatory region. Facilitates also the degradation of selected endoplasmic reticulum proteins by associating with signal peptide peptidase for the turnover of endogenous tail-anchored proteins. Promotes ubiquitination of DIO2, leading to its degradation. By ubiquitinating and thereby modulating the stability of many proteins of the cholesterol pathway including SQLE, CYP51A1, CYP11A1 and HMGCR, acts as a crucial post-translational regulator of cholesterol synthesis. In Mus musculus (Mouse), this protein is E3 ubiquitin-protein ligase MARCHF6 (Marchf6).